A 505-amino-acid chain; its full sequence is MSSKVRVRFAPSPTGPLHIGGVRTALYNYLFAKKHGGDFVLRIEDTDQNRYVEGAEDYIIEALNWCGIPYDEGPGKEKGFGPYRQSERKDQYREYAEKLIKSGNAYYAFDTSDELDGHRKDHEEKGKTFIYNWHNRQKLKNSLSLSQEEVQEKLDGEEDYVIRFKSPQDETLHLKDVIRGDMEIDTNILDDKVLFKSDGMPTYHLANIVDDHLMEITHVIRGEEWLPSLALHYMLYRAFGWNAPQFAHLPLILKPQGKGKLSKRDGEKMGFPVFPLEWKDPESGDISAGYKEEGYFPEAVVNMLAFLGWNPGTEEEFFGLEDLTKAFELERVHKGGAKFDPEKTKWFQQHYIQLADNEFLADEFEKRLEKKEIEADKIYISEVVALIKERVVFVEDFWDQGYFFFIAPTSFDPKDSKKAWKEGTSELMTELNEYLKSIDNFEAEHLQETVKGWIKSKEIGFGKVMMPLRIALVGALQGPDLYKIAEFIGKEATLKRIQKAVDTLK.

Positions 11 to 21 (PSPTGPLHIGG) match the 'HIGH' region motif. The 'KMSKS' region signature appears at 260-264 (KLSKR). Lys-263 is a binding site for ATP.

This sequence belongs to the class-I aminoacyl-tRNA synthetase family. Glutamate--tRNA ligase type 1 subfamily. As to quaternary structure, monomer.

The protein localises to the cytoplasm. The enzyme catalyses tRNA(Glu) + L-glutamate + ATP = L-glutamyl-tRNA(Glu) + AMP + diphosphate. In terms of biological role, catalyzes the attachment of glutamate to tRNA(Glu) in a two-step reaction: glutamate is first activated by ATP to form Glu-AMP and then transferred to the acceptor end of tRNA(Glu). This chain is Glutamate--tRNA ligase, found in Christiangramia forsetii (strain DSM 17595 / CGMCC 1.15422 / KT0803) (Gramella forsetii).